The primary structure comprises 303 residues: Ornithine carbamoyltransferase (303 aa).

Residues 52–55 (STRT), glutamine 79, arginine 103, and 130–133 (HPCQ) each bind carbamoyl phosphate. Residues asparagine 161, aspartate 222, and 226–227 (SM) contribute to the L-ornithine site. Carbamoyl phosphate-binding positions include 262–263 (CL) and lysine 290.

The protein belongs to the aspartate/ornithine carbamoyltransferase superfamily. OTCase family.

It localises to the cytoplasm. The catalysed reaction is carbamoyl phosphate + L-ornithine = L-citrulline + phosphate + H(+). The protein operates within amino-acid biosynthesis; L-arginine biosynthesis; L-arginine from L-ornithine and carbamoyl phosphate: step 1/3. In terms of biological role, reversibly catalyzes the transfer of the carbamoyl group from carbamoyl phosphate (CP) to the N(epsilon) atom of ornithine (ORN) to produce L-citrulline. The chain is Ornithine carbamoyltransferase from Desulfotalea psychrophila (strain LSv54 / DSM 12343).